The sequence spans 382 residues: Putative NADPH dehydrogenase C5H10.04 (382 aa).

2 residues coordinate FMN: Thr-28 and His-189. Residues His-189 and Asn-192 each coordinate substrate. Arg-242 and Arg-334 together coordinate FMN. Tyr-361 serves as a coordination point for substrate.

It belongs to the NADH:flavin oxidoreductase/NADH oxidase family. In terms of assembly, homodimer or heterodimer. FMN is required as a cofactor.

It catalyses the reaction A + NADPH + H(+) = AH2 + NADP(+). This Schizosaccharomyces pombe (strain 972 / ATCC 24843) (Fission yeast) protein is Putative NADPH dehydrogenase C5H10.04.